Here is a 601-residue protein sequence, read N- to C-terminus: Glutathione-regulated potassium-efflux system protein KefB (601 aa).

The next 13 helical transmembrane spans lie at 4-24 (SDLL…VPLA), 29-49 (IGAV…GLGF), 55-75 (EILH…GLEL), 87-107 (IFGV…GLLM), 115-135 (AAVV…LQLM), 152-172 (VLLF…LLAG), 177-197 (HVNW…LIGG), 207-227 (FIAS…LVLG), 230-250 (LFME…GVLL), 268-288 (GLLL…GVLY), 291-311 (LLWV…VLYL), 326-346 (FAGV…LPAS), and 356-376 (ALLL…MKGI). In terms of domain architecture, RCK N-terminal spans 400-519 (KPQVIIVGFG…AGVTQFSRET (120 aa)).

The protein belongs to the monovalent cation:proton antiporter 2 (CPA2) transporter (TC 2.A.37) family. KefB subfamily. Interacts with the regulatory subunit KefG.

The protein localises to the cell inner membrane. Pore-forming subunit of a potassium efflux system that confers protection against electrophiles. Catalyzes K(+)/H(+) antiport. The protein is Glutathione-regulated potassium-efflux system protein KefB of Klebsiella pneumoniae (strain 342).